A 292-amino-acid chain; its full sequence is Elongation factor Ts (292 aa).

An involved in Mg(2+) ion dislocation from EF-Tu region spans residues 80–83; sequence TDFV.

It belongs to the EF-Ts family.

Its subcellular location is the cytoplasm. Its function is as follows. Associates with the EF-Tu.GDP complex and induces the exchange of GDP to GTP. It remains bound to the aminoacyl-tRNA.EF-Tu.GTP complex up to the GTP hydrolysis stage on the ribosome. The protein is Elongation factor Ts of Cupriavidus pinatubonensis (strain JMP 134 / LMG 1197) (Cupriavidus necator (strain JMP 134)).